The sequence spans 407 residues: Arginine deiminase (407 aa).

The Amidino-cysteine intermediate role is filled by C397.

The protein belongs to the arginine deiminase family.

The protein localises to the cytoplasm. It carries out the reaction L-arginine + H2O = L-citrulline + NH4(+). The protein operates within amino-acid degradation; L-arginine degradation via ADI pathway; carbamoyl phosphate from L-arginine: step 1/2. The chain is Arginine deiminase from Limosilactobacillus fermentum (strain NBRC 3956 / LMG 18251) (Lactobacillus fermentum).